The primary structure comprises 430 residues: 3-phosphoshikimate 1-carboxyvinyltransferase (430 aa).

3-phosphoshikimate contacts are provided by Lys-20, Ser-21, and Arg-25. A phosphoenolpyruvate-binding site is contributed by Lys-20. The phosphoenolpyruvate site is built by Gly-92 and Arg-120. 3-phosphoshikimate-binding residues include Ser-166, Gln-168, Asp-312, and Lys-339. Gln-168 serves as a coordination point for phosphoenolpyruvate. Asp-312 acts as the Proton acceptor in catalysis. Phosphoenolpyruvate contacts are provided by Arg-343 and Arg-387.

The protein belongs to the EPSP synthase family. As to quaternary structure, monomer.

The protein resides in the cytoplasm. The enzyme catalyses 3-phosphoshikimate + phosphoenolpyruvate = 5-O-(1-carboxyvinyl)-3-phosphoshikimate + phosphate. It participates in metabolic intermediate biosynthesis; chorismate biosynthesis; chorismate from D-erythrose 4-phosphate and phosphoenolpyruvate: step 6/7. Its function is as follows. Catalyzes the transfer of the enolpyruvyl moiety of phosphoenolpyruvate (PEP) to the 5-hydroxyl of shikimate-3-phosphate (S3P) to produce enolpyruvyl shikimate-3-phosphate and inorganic phosphate. This Lactococcus lactis subsp. lactis (strain IL1403) (Streptococcus lactis) protein is 3-phosphoshikimate 1-carboxyvinyltransferase.